A 38-amino-acid chain; its full sequence is MKVRASVKKICDKCKVIKRKGTVRIICPANPRHKQRQG.

Belongs to the bacterial ribosomal protein bL36 family.

This chain is Large ribosomal subunit protein bL36, found in Anaeromyxobacter dehalogenans (strain 2CP-1 / ATCC BAA-258).